The chain runs to 549 residues: Glucose-6-phosphate isomerase (549 aa).

Catalysis depends on glutamate 353, which acts as the Proton donor. Active-site residues include histidine 384 and lysine 510. The interval 523–549 (AEPPAAQSDSSTDALVRRYRSERGRTA) is disordered. Residues 537–549 (LVRRYRSERGRTA) show a composition bias toward basic and acidic residues.

Belongs to the GPI family.

The protein resides in the cytoplasm. The catalysed reaction is alpha-D-glucose 6-phosphate = beta-D-fructose 6-phosphate. Its pathway is carbohydrate biosynthesis; gluconeogenesis. It participates in carbohydrate degradation; glycolysis; D-glyceraldehyde 3-phosphate and glycerone phosphate from D-glucose: step 2/4. Functionally, catalyzes the reversible isomerization of glucose-6-phosphate to fructose-6-phosphate. The polypeptide is Glucose-6-phosphate isomerase (Mycolicibacterium gilvum (strain PYR-GCK) (Mycobacterium gilvum (strain PYR-GCK))).